The sequence spans 254 residues: 3-deoxy-manno-octulosonate cytidylyltransferase (254 aa).

The protein belongs to the KdsB family.

It is found in the cytoplasm. The catalysed reaction is 3-deoxy-alpha-D-manno-oct-2-ulosonate + CTP = CMP-3-deoxy-beta-D-manno-octulosonate + diphosphate. It functions in the pathway nucleotide-sugar biosynthesis; CMP-3-deoxy-D-manno-octulosonate biosynthesis; CMP-3-deoxy-D-manno-octulosonate from 3-deoxy-D-manno-octulosonate and CTP: step 1/1. It participates in bacterial outer membrane biogenesis; lipopolysaccharide biosynthesis. Its function is as follows. Activates KDO (a required 8-carbon sugar) for incorporation into bacterial lipopolysaccharide in Gram-negative bacteria. In Haemophilus influenzae (strain PittEE), this protein is 3-deoxy-manno-octulosonate cytidylyltransferase.